The primary structure comprises 278 residues: Indole-3-glycerol phosphate synthase (278 aa).

Belongs to the TrpC family.

The catalysed reaction is 1-(2-carboxyphenylamino)-1-deoxy-D-ribulose 5-phosphate + H(+) = (1S,2R)-1-C-(indol-3-yl)glycerol 3-phosphate + CO2 + H2O. It functions in the pathway amino-acid biosynthesis; L-tryptophan biosynthesis; L-tryptophan from chorismate: step 4/5. The protein is Indole-3-glycerol phosphate synthase of Pseudomonas aeruginosa (strain UCBPP-PA14).